Here is a 98-residue protein sequence, read N- to C-terminus: EKC/KEOPS complex subunit GON7 (98 aa).

Met-1 is modified (N-acetylmethionine). The segment at Asp-55 to Ser-98 is disordered. Positions Glu-61–Asn-79 are enriched in acidic residues.

In terms of assembly, component of the EKC/KEOPS complex composed of at least GON7, TP53RK, TPRKB, OSGEP and LAGE3; the whole complex dimerizes.

It is found in the nucleus. In terms of biological role, component of the EKC/KEOPS complex that is required for the formation of a threonylcarbamoyl group on adenosine at position 37 (t(6)A37) in tRNAs that read codons beginning with adenine. The complex is probably involved in the transfer of the threonylcarbamoyl moiety of threonylcarbamoyl-AMP (TC-AMP) to the N6 group of A37. GON7 plays a supporting role to the catalytic subunit OSGEP in the complex. This chain is EKC/KEOPS complex subunit GON7, found in Mus musculus (Mouse).